A 109-amino-acid polypeptide reads, in one-letter code: MSEYKSVQKGSLKLKGVSLPSKKKKKKNKEMKRLEEQVLTSENEEGTKKAYVDKRTPAQMAFDKIQEKRQMERILKKASKTHKRRVEDFNRHLDTLTEHYDIPKVSWTK.

Positions Met-1–Lys-48 are disordered. Residues Lys-9–Pro-20 are compositionally biased toward low complexity. Basic residues predominate over residues Ser-21–Glu-30.

It belongs to the FAM32 family.

The protein localises to the nucleus. Its function is as follows. May induce G2 arrest and apoptosis. May also increase cell sensitivity to apoptotic stimuli. This chain is Protein FAM32A-like (fam32al), found in Danio rerio (Zebrafish).